The primary structure comprises 88 residues: Exodeoxyribonuclease 7 small subunit (88 aa).

A disordered region spans residues 69 to 88; the sequence is DPMRPDDGEPFDPSIVSTSQ.

It belongs to the XseB family. Heterooligomer composed of large and small subunits.

It localises to the cytoplasm. It catalyses the reaction Exonucleolytic cleavage in either 5'- to 3'- or 3'- to 5'-direction to yield nucleoside 5'-phosphates.. Functionally, bidirectionally degrades single-stranded DNA into large acid-insoluble oligonucleotides, which are then degraded further into small acid-soluble oligonucleotides. This is Exodeoxyribonuclease 7 small subunit from Xylella fastidiosa (strain M12).